Consider the following 179-residue polypeptide: dCTP deaminase (179 aa).

Residues 101 to 106 (RSTLAR) and aspartate 117 contribute to the dCTP site. Glutamate 127 (proton donor/acceptor) is an active-site residue. Glutamine 165 contacts dCTP.

The protein belongs to the dCTP deaminase family. Homotrimer.

It carries out the reaction dCTP + H2O + H(+) = dUTP + NH4(+). The protein operates within pyrimidine metabolism; dUMP biosynthesis; dUMP from dCTP (dUTP route): step 1/2. Its function is as follows. Catalyzes the deamination of dCTP to dUTP. This chain is dCTP deaminase, found in Caldivirga maquilingensis (strain ATCC 700844 / DSM 13496 / JCM 10307 / IC-167).